The primary structure comprises 602 residues: RecBCD enzyme subunit RecD (602 aa).

Residue 174–181 (GGPGTGKT) coordinates ATP.

The protein belongs to the RecD family. In terms of assembly, heterotrimer of RecB, RecC and RecD. All subunits contribute to DNA-binding.

The catalysed reaction is Couples ATP hydrolysis with the unwinding of duplex DNA at the replication fork by translocating in the 5'-3' direction. This creates two antiparallel DNA single strands (ssDNA). The leading ssDNA polymer is the template for DNA polymerase III holoenzyme which synthesizes a continuous strand.. It catalyses the reaction ATP + H2O = ADP + phosphate + H(+). Its function is as follows. A helicase/nuclease that prepares dsDNA breaks (DSB) for recombinational DNA repair. Binds to DSBs and unwinds DNA via a highly rapid and processive ATP-dependent bidirectional helicase activity. Unwinds dsDNA until it encounters a Chi (crossover hotspot instigator) sequence from the 3' direction. Cuts ssDNA a few nucleotides 3' to the Chi site. The properties and activities of the enzyme are changed at Chi. The Chi-altered holoenzyme produces a long 3'-ssDNA overhang and facilitates RecA-binding to the ssDNA for homologous DNA recombination and repair. Holoenzyme degrades any linearized DNA that is unable to undergo homologous recombination. In the holoenzyme this subunit has ssDNA-dependent ATPase and 5'-3' helicase activity. When added to pre-assembled RecBC greatly stimulates nuclease activity and augments holoenzyme processivity. Negatively regulates the RecA-loading ability of RecBCD. The protein is RecBCD enzyme subunit RecD of Buchnera aphidicola subsp. Schizaphis graminum (strain Sg).